A 628-amino-acid polypeptide reads, in one-letter code: Chaperone protein DnaK (628 aa).

A Phosphothreonine; by autocatalysis modification is found at Thr-174. Residues 589-628 form a disordered region; sequence AAGGAGPDMGAGAGPDMGAGASNGSAPYGDDVVDGDYKEV. Residues 591–605 are compositionally biased toward gly residues; it reads GGAGPDMGAGAGPDM.

This sequence belongs to the heat shock protein 70 family.

Functionally, acts as a chaperone. This chain is Chaperone protein DnaK, found in Lachnospira eligens (strain ATCC 27750 / DSM 3376 / VPI C15-48 / C15-B4) (Eubacterium eligens).